We begin with the raw amino-acid sequence, 255 residues long: Glutamate racemase (255 aa).

Substrate is bound by residues 7–8 and 39–40; these read DS and YG. Cysteine 70 (proton donor/acceptor) is an active-site residue. 71 to 72 provides a ligand contact to substrate; sequence NT. The Proton donor/acceptor role is filled by cysteine 181. 182 to 183 is a binding site for substrate; it reads TH.

This sequence belongs to the aspartate/glutamate racemases family.

It catalyses the reaction L-glutamate = D-glutamate. It functions in the pathway cell wall biogenesis; peptidoglycan biosynthesis. In terms of biological role, provides the (R)-glutamate required for cell wall biosynthesis. The chain is Glutamate racemase from Helicobacter pylori (strain G27).